Here is a 448-residue protein sequence, read N- to C-terminus: Phosphoglucosamine mutase (448 aa).

Catalysis depends on S101, which acts as the Phosphoserine intermediate. 4 residues coordinate Mg(2+): S101, D242, D244, and D246. Residue S101 is modified to Phosphoserine.

Belongs to the phosphohexose mutase family. Mg(2+) is required as a cofactor. Post-translationally, activated by phosphorylation.

It carries out the reaction alpha-D-glucosamine 1-phosphate = D-glucosamine 6-phosphate. Its function is as follows. Catalyzes the conversion of glucosamine-6-phosphate to glucosamine-1-phosphate. This is Phosphoglucosamine mutase from Nitrobacter winogradskyi (strain ATCC 25391 / DSM 10237 / CIP 104748 / NCIMB 11846 / Nb-255).